Consider the following 338-residue polypeptide: Fructose-1,6-bisphosphatase class 1 (338 aa).

Mg(2+)-binding residues include Glu94, Asp116, Leu118, and Asp119. Substrate-binding positions include 119 to 122 (DGSS), Asn210, and Lys276. Glu282 is a Mg(2+) binding site.

Belongs to the FBPase class 1 family. As to quaternary structure, homotetramer. Mg(2+) is required as a cofactor.

It localises to the cytoplasm. The catalysed reaction is beta-D-fructose 1,6-bisphosphate + H2O = beta-D-fructose 6-phosphate + phosphate. Its pathway is carbohydrate biosynthesis; gluconeogenesis. In Paraburkholderia phytofirmans (strain DSM 17436 / LMG 22146 / PsJN) (Burkholderia phytofirmans), this protein is Fructose-1,6-bisphosphatase class 1.